The following is a 315-amino-acid chain: Methionyl-tRNA formyltransferase (315 aa).

113–116 (SLLP) is a (6S)-5,6,7,8-tetrahydrofolate binding site.

It belongs to the Fmt family.

The enzyme catalyses L-methionyl-tRNA(fMet) + (6R)-10-formyltetrahydrofolate = N-formyl-L-methionyl-tRNA(fMet) + (6S)-5,6,7,8-tetrahydrofolate + H(+). Its function is as follows. Attaches a formyl group to the free amino group of methionyl-tRNA(fMet). The formyl group appears to play a dual role in the initiator identity of N-formylmethionyl-tRNA by promoting its recognition by IF2 and preventing the misappropriation of this tRNA by the elongation apparatus. This Shigella flexneri serotype 5b (strain 8401) protein is Methionyl-tRNA formyltransferase.